Here is a 257-residue protein sequence, read N- to C-terminus: Probable oxidoreductase yanE (257 aa).

It belongs to the oxidoreductase OpS7 family.

It functions in the pathway secondary metabolite biosynthesis; terpenoid biosynthesis. Part of the gene cluster that mediates the biosynthesis of yanuthone D, a fungal isoprenoid epoxycyclohexenone that acts as an antibiotic against fungi and bacteria. The first step of the pathway is the synthesis of 6-methylsalicylic acid (6-MSA) by the polyketide synthase yanA. 6-MSA is then converted to m-cresol by the decarboxylase yanB. The cytochrome P450 monooxygenase yanC then catalyzes the oxidation of m-cresol to toluquinol. Epoxidation of toluquinol is then performed by the short chain dehydrogenase yanD, with the help of yanE, and a further prenylation by yanG leads to 7-deacetoxyyanuthone A. The next step is the hydroxylation of C-22 of 7-deacetoxyyanuthone A by the cytochrome P450 monooxygenase yanH to yield 22-deacetylyanuthone A. O-Mevalon transferase yanI then attaches mevalon to the hydroxyl group of 22-deacetylyanuthone A to produce yanuthone E. Finally, the FAD-dependent monooxygenase yanF oxidizes the hydroxyl group at C15 of yanuthone E to form yanuthone D. Furthermore, several branching points in the pathway lead to the production of yanuthones F and G from 7-deacetoxyyanuthone A; yanuthones H and I from 22-deacetylyanuthone A; and yanuthone J from yanuthone E. YanE is also involved in the synthesis of yanuthone X1 which does not have 6-methylsalicylic acid (6-MSA) as precursor. The chain is Probable oxidoreductase yanE from Aspergillus niger (strain ATCC 1015 / CBS 113.46 / FGSC A1144 / LSHB Ac4 / NCTC 3858a / NRRL 328 / USDA 3528.7).